We begin with the raw amino-acid sequence, 408 residues long: Serine/threonine transporter SstT (408 aa).

9 consecutive transmembrane segments (helical) span residues 11–31 (LANGSLVLQILVGIIAGVSLA), 43–63 (FLGSLFVGALKAIAPILVFIL), 82–102 (IVVLYLFGTFAAALTAVLLSM), 141–161 (ALMTGNYIGILAWGVGLGLAL), 192–212 (IGIFGLVAATFAETGFAAIAG), 216–236 (LLAVLLGAMAIIALIVNPLIV), 290–310 (IPLGATINMGGAAITITVLTL), 316–336 (LGIQVDLLTALLLSVVAAISA), and 363–383 (VAMQVVAVGFIIGVIQDAAET).

The protein belongs to the dicarboxylate/amino acid:cation symporter (DAACS) (TC 2.A.23) family.

It localises to the cell inner membrane. It catalyses the reaction L-serine(in) + Na(+)(in) = L-serine(out) + Na(+)(out). The enzyme catalyses L-threonine(in) + Na(+)(in) = L-threonine(out) + Na(+)(out). Functionally, involved in the import of serine and threonine into the cell, with the concomitant import of sodium (symport system). In Shewanella sp. (strain MR-4), this protein is Serine/threonine transporter SstT.